Consider the following 101-residue polypeptide: Venom peptide Pc (101 aa).

The signal sequence occupies residues 1 to 20 (MSHLRIAVIFLCTLFALTAG).

It belongs to the scorpion La1-like peptide family. Post-translationally, contains 4 disulfide bonds. As to expression, expressed by the venom gland.

The protein localises to the secreted. The protein is Venom peptide Pc of Pandinus cavimanus (Tanzanian red clawed scorpion).